The chain runs to 489 residues: MTTEQPTARLQRVDSQPENPFSALIEDQSIVIIPTFTLESGVTLYNVPVAYTTRGTLSPSGDNALVICHALSGSADVADWWGPLLGGPGQAFDISRFFVVCLNSLGSPYGSASAVTYKDGNPEKGLYGPEFPLTTVRDDVRIHKMVLDDLGIKQIAAVVGGSMGGMLTLEYAYFGKDYVRAIVPIATSARHSAWCISWGEAQRQSIYSDPKYENGYYSFDEPPAAGLGAARMSALLTYRSRNSFESRFGRNVPDPSKRQNINGTERLPTPPNEHWAIHNDGHKGNWSGRNSPAPEKPAEKTEVQYMDPQFSGTKTFSKSVSTTDGNAQKRPATYFSAQSYLRYQGDKFVKRFDANCYIAITRKLDTHDVSRHRARPDSENPVREALSQIQQPALVLGIESDGLFTFEEQKEIAEGIPDSRLKRIDSPEGHDAFLLQFEQVNQYILEFFREVLPDIMSKTPTDGAAIDGVGKLTKSSTFGEAEVEDITAW.

Residues 63-435 enclose the AB hydrolase-1 domain; that stretch reads NALVICHALS…SPEGHDAFLL (373 aa). Ser162 is a catalytic residue. Ser162 acts as the Nucleophile in catalysis. Residues 247 to 272 are disordered; that stretch reads RFGRNVPDPSKRQNINGTERLPTPPN. Residues Asp401 and His430 contribute to the active site.

This sequence belongs to the AB hydrolase superfamily. MetX family.

The enzyme catalyses L-homoserine + acetyl-CoA = O-acetyl-L-homoserine + CoA. It participates in amino-acid biosynthesis; L-methionine biosynthesis via de novo pathway; O-acetyl-L-homoserine from L-homoserine: step 1/1. Its function is as follows. Commits homoserine to the methionine biosynthesis pathway by catalyzing its O-acetylation. The chain is Homoserine O-acetyltransferase (metE) from Emericella nidulans (strain FGSC A4 / ATCC 38163 / CBS 112.46 / NRRL 194 / M139) (Aspergillus nidulans).